The sequence spans 145 residues: MGRFIFVSFGLLVVFVSLSGTGADCPSGWSSYEGHCYKLFNQQSQWAHAEKFCTLQHTGGHLVSFHSTEEADFVVKLAFQNFGHGIFWMGLSNVWNQCSWQWSNAAKLKYEAWAEIYCVYFKSTNNKWRSRACRMEAYFVCEFQA.

A signal peptide spans 1–23 (MGRFIFVSFGLLVVFVSLSGTGA). 3 cysteine pairs are disulfide-bonded: cysteine 25–cysteine 36, cysteine 53–cysteine 141, and cysteine 118–cysteine 133. A C-type lectin domain is found at 32-142 (YEGHCYKLFN…CRMEAYFVCE (111 aa)). Ca(2+) contacts are provided by serine 64 and glutamate 70. Glutamate 142 serves as a coordination point for Ca(2+).

It belongs to the snaclec family. As to quaternary structure, heterodimer of subunits A and B; disulfide-linked. Expressed by the venom gland.

It is found in the secreted. In terms of biological role, inhibits thrombin-induced fibrinogen clotting and factor Xa-induced prothrombin activation. Binds to thrombin and prothrombin exosites. This is Snaclec salmorin subunit B from Gloydius brevicauda (Korean slamosa snake).